The chain runs to 190 residues: Probable nicotinate-nucleotide adenylyltransferase (190 aa).

Belongs to the NadD family.

The enzyme catalyses nicotinate beta-D-ribonucleotide + ATP + H(+) = deamido-NAD(+) + diphosphate. It participates in cofactor biosynthesis; NAD(+) biosynthesis; deamido-NAD(+) from nicotinate D-ribonucleotide: step 1/1. Catalyzes the reversible adenylation of nicotinate mononucleotide (NaMN) to nicotinic acid adenine dinucleotide (NaAD). This chain is Probable nicotinate-nucleotide adenylyltransferase, found in Borrelia hermsii (strain HS1 / DAH).